Reading from the N-terminus, the 458-residue chain is Argininosuccinate lyase (458 aa).

Belongs to the lyase 1 family. Argininosuccinate lyase subfamily.

It localises to the cytoplasm. The enzyme catalyses 2-(N(omega)-L-arginino)succinate = fumarate + L-arginine. The protein operates within amino-acid biosynthesis; L-arginine biosynthesis; L-arginine from L-ornithine and carbamoyl phosphate: step 3/3. The chain is Argininosuccinate lyase from Neisseria meningitidis serogroup C (strain 053442).